The primary structure comprises 769 residues: 5-methyltetrahydropteroyltriglutamate--homocysteine methyltransferase (769 aa).

Residues 18 to 21 and lysine 127 contribute to the 5-methyltetrahydropteroyltri-L-glutamate site; that span reads RELK. Residues 447-449 and glutamate 500 contribute to the L-homocysteine site; that span reads IGS. Residues 447 to 449 and glutamate 500 contribute to the L-methionine site; that span reads IGS. 5-methyltetrahydropteroyltri-L-glutamate is bound by residues 531–532 and tryptophan 577; that span reads RC. Aspartate 615 provides a ligand contact to L-homocysteine. Aspartate 615 contributes to the L-methionine binding site. Glutamate 621 is a binding site for 5-methyltetrahydropteroyltri-L-glutamate. Histidine 657, cysteine 659, and glutamate 681 together coordinate Zn(2+). Residue histidine 710 is the Proton donor of the active site. Residue cysteine 742 participates in Zn(2+) binding.

The protein belongs to the vitamin-B12 independent methionine synthase family. Zn(2+) is required as a cofactor.

The catalysed reaction is 5-methyltetrahydropteroyltri-L-glutamate + L-homocysteine = tetrahydropteroyltri-L-glutamate + L-methionine. Its pathway is amino-acid biosynthesis; L-methionine biosynthesis via de novo pathway; L-methionine from L-homocysteine (MetE route): step 1/1. Functionally, catalyzes the transfer of a methyl group from 5-methyltetrahydrofolate to homocysteine resulting in methionine formation. This Chelativorans sp. (strain BNC1) protein is 5-methyltetrahydropteroyltriglutamate--homocysteine methyltransferase.